The sequence spans 143 residues: Putative pre-16S rRNA nuclease (143 aa).

It belongs to the YqgF nuclease family.

It is found in the cytoplasm. In terms of biological role, could be a nuclease involved in processing of the 5'-end of pre-16S rRNA. This chain is Putative pre-16S rRNA nuclease, found in Salinibacter ruber (strain DSM 13855 / M31).